The primary structure comprises 446 residues: Tetratricopeptide repeat protein 23 (446 aa).

4 TPR repeats span residues 45–78, 137–170, 186–219, and 356–389; these read LHLC…TKIC, LELF…SKEM, SRIK…TETT, and AETY…ETFL.

As to quaternary structure, associated with the EvC complex composed of EFCAB7, IQCE, EVC2 and EVC.

The protein resides in the cell projection. The protein localises to the cilium. In terms of biological role, participates positively in the ciliary Hedgehog (Hh) signaling. In Rattus norvegicus (Rat), this protein is Tetratricopeptide repeat protein 23 (Ttc23).